Reading from the N-terminus, the 107-residue chain is Phosphoribosyl-ATP pyrophosphatase (107 aa).

Belongs to the PRA-PH family.

The protein resides in the cytoplasm. The catalysed reaction is 1-(5-phospho-beta-D-ribosyl)-ATP + H2O = 1-(5-phospho-beta-D-ribosyl)-5'-AMP + diphosphate + H(+). Its pathway is amino-acid biosynthesis; L-histidine biosynthesis; L-histidine from 5-phospho-alpha-D-ribose 1-diphosphate: step 2/9. This is Phosphoribosyl-ATP pyrophosphatase from Rhizobium etli (strain CIAT 652).